Reading from the N-terminus, the 624-residue chain is 1-deoxy-D-xylulose-5-phosphate synthase (624 aa).

Thiamine diphosphate-binding positions include His80 and Gly121–Ser123. Asp152 provides a ligand contact to Mg(2+). Thiamine diphosphate is bound by residues Gly153–Ala154, Asn181, Tyr289, and Glu371. Residue Asn181 participates in Mg(2+) binding.

It belongs to the transketolase family. DXPS subfamily. As to quaternary structure, homodimer. Mg(2+) serves as cofactor. The cofactor is thiamine diphosphate.

It catalyses the reaction D-glyceraldehyde 3-phosphate + pyruvate + H(+) = 1-deoxy-D-xylulose 5-phosphate + CO2. It participates in metabolic intermediate biosynthesis; 1-deoxy-D-xylulose 5-phosphate biosynthesis; 1-deoxy-D-xylulose 5-phosphate from D-glyceraldehyde 3-phosphate and pyruvate: step 1/1. Catalyzes the acyloin condensation reaction between C atoms 2 and 3 of pyruvate and glyceraldehyde 3-phosphate to yield 1-deoxy-D-xylulose-5-phosphate (DXP). This Blochmanniella pennsylvanica (strain BPEN) protein is 1-deoxy-D-xylulose-5-phosphate synthase.